We begin with the raw amino-acid sequence, 101 residues long: Small ribosomal subunit protein uS14 (101 aa).

It belongs to the universal ribosomal protein uS14 family. Part of the 30S ribosomal subunit. Contacts proteins S3 and S10.

Functionally, binds 16S rRNA, required for the assembly of 30S particles and may also be responsible for determining the conformation of the 16S rRNA at the A site. The polypeptide is Small ribosomal subunit protein uS14 (Alcanivorax borkumensis (strain ATCC 700651 / DSM 11573 / NCIMB 13689 / SK2)).